We begin with the raw amino-acid sequence, 87 residues long: Phosphocarrier protein HPr (87 aa).

The 87-residue stretch at 1–87 (MAEKTFTITA…EEVIKEGLGE (87 aa)) folds into the HPr domain. The active-site Pros-phosphohistidine intermediate is the H15. S46 carries the post-translational modification Phosphoserine; by HPrK/P.

It belongs to the HPr family.

Its subcellular location is the cytoplasm. With respect to regulation, phosphorylation on Ser-46 inhibits the phosphoryl transfer from enzyme I to HPr. Functionally, general (non sugar-specific) component of the phosphoenolpyruvate-dependent sugar phosphotransferase system (sugar PTS). This major carbohydrate active-transport system catalyzes the phosphorylation of incoming sugar substrates concomitantly with their translocation across the cell membrane. The phosphoryl group from phosphoenolpyruvate (PEP) is transferred to the phosphoryl carrier protein HPr by enzyme I. Phospho-HPr then transfers it to the PTS EIIA domain. P-Ser-HPr interacts with the catabolite control protein A (CcpA), forming a complex that binds to DNA at the catabolite response elements cre, operator sites preceding a large number of catabolite-regulated genes. Thus, P-Ser-HPr is a corepressor in carbon catabolite repression (CCR), a mechanism that allows bacteria to coordinate and optimize the utilization of available carbon sources. P-Ser-HPr also plays a role in inducer exclusion, in which it probably interacts with several non-PTS permeases and inhibits their transport activity. The chain is Phosphocarrier protein HPr (ptsH) from Halalkalibacterium halodurans (strain ATCC BAA-125 / DSM 18197 / FERM 7344 / JCM 9153 / C-125) (Bacillus halodurans).